Consider the following 71-residue polypeptide: Large ribosomal subunit protein bL31 (71 aa).

4 residues coordinate Zn(2+): C16, C18, C38, and C41.

The protein belongs to the bacterial ribosomal protein bL31 family. Type A subfamily. In terms of assembly, part of the 50S ribosomal subunit. The cofactor is Zn(2+).

Binds the 23S rRNA. The protein is Large ribosomal subunit protein bL31 of Francisella tularensis subsp. mediasiatica (strain FSC147).